The following is a 383-amino-acid chain: Ribosomal RNA large subunit methyltransferase G (383 aa).

It belongs to the methyltransferase superfamily. RlmG family.

It localises to the cytoplasm. The catalysed reaction is guanosine(1835) in 23S rRNA + S-adenosyl-L-methionine = N(2)-methylguanosine(1835) in 23S rRNA + S-adenosyl-L-homocysteine + H(+). Functionally, specifically methylates the guanine in position 1835 (m2G1835) of 23S rRNA. The chain is Ribosomal RNA large subunit methyltransferase G from Shewanella denitrificans (strain OS217 / ATCC BAA-1090 / DSM 15013).